We begin with the raw amino-acid sequence, 134 residues long: Arsenate reductase (134 aa).

Active-site nucleophile residues include Cys11, Cys83, and Cys90. Disulfide bonds link Cys11-Cys83 and Cys83-Cys90.

It belongs to the low molecular weight phosphotyrosine protein phosphatase family. Thioredoxin-coupled ArsC subfamily.

It is found in the cytoplasm. The enzyme catalyses arsenate + [thioredoxin]-dithiol + H(+) = arsenite + [thioredoxin]-disulfide + H2O. Catalyzes the reduction of arsenate [As(V)] to arsenite [As(III)]. The sequence is that of Arsenate reductase from Bacillus cereus (strain G9842).